A 429-amino-acid polypeptide reads, in one-letter code: O-methyltransferase phnC (429 aa).

D285 provides a ligand contact to S-adenosyl-L-methionine.

This sequence belongs to the class I-like SAM-binding methyltransferase superfamily. Cation-independent O-methyltransferase family. COMT subfamily.

It catalyses the reaction (2'R)-atrovenetin + S-adenosyl-L-methionine = deoxyherqueinone + S-adenosyl-L-homocysteine + H(+). It participates in secondary metabolite biosynthesis. In terms of biological role, O-methyltransferase; part of the gene cluster that mediates the biosynthesis of phenalenones such as herqueinone, compounds that have been reported to treat tumors, bacterial infections and/or mycoses, and rheumatic diseases. The non-reducing polyketide synthase phnA synthesizes the heptaketide backbone and cyclizes it into the angular, hemiketal-containing naphtho-gamma-pyrone prephenalenone. The product template (PT) domain of phnA catalyzes only the C4-C9 aldol condensation, which is unprecedented among known PT domains. The transformation of prephenalenone to phenalenones requires an FAD-dependent monooxygenase phnB, which catalyzes the C2 aromatic hydroxylation of prephenalenone and ring opening of the gamma-pyrone ring simultaneously. Subsequent intramolecular deprotonation of C3 phenolic oxygen accelerates phenalenone ring closure to yield the tricyclic phenalenone core with a C2 hydroxylation. The prenyltransferase phnF further catalyzes reverse C-prenylation of phenalenone by direct electrophilic substitution at C6, or possibly via first a forward O-prenylation of a neighboring phenol in phenalenone, followed by a Claisen rearrangement. The hydroalkoxylation enzyme phnH catalyzes the 5-exo-trig cyclization via acid catalysis after the spontaneous deprotonation of 7-OH, which leads to the formation of the dihydrobenzofuran atrovenetin. Atrovenetin is further converted to deoxyherqueinone by the O-methyltransferase phnC which can methylate C2-OH to stabilize the northern portion of the phenalenone core. Finally, the oxidoreductase phnG converts deoxyherqueinone to herqueinone via C6 hydroxylation. The chain is O-methyltransferase phnC from Penicillium herquei.